A 557-amino-acid chain; its full sequence is Formate--tetrahydrofolate ligase (557 aa).

65 to 72 is an ATP binding site; it reads TPAGEGKT.

It belongs to the formate--tetrahydrofolate ligase family.

The enzyme catalyses (6S)-5,6,7,8-tetrahydrofolate + formate + ATP = (6R)-10-formyltetrahydrofolate + ADP + phosphate. It functions in the pathway one-carbon metabolism; tetrahydrofolate interconversion. In Methylorubrum extorquens (strain PA1) (Methylobacterium extorquens), this protein is Formate--tetrahydrofolate ligase.